Consider the following 144-residue polypeptide: Transcription antitermination protein NusB (144 aa).

It belongs to the NusB family.

Functionally, involved in transcription antitermination. Required for transcription of ribosomal RNA (rRNA) genes. Binds specifically to the boxA antiterminator sequence of the ribosomal RNA (rrn) operons. The protein is Transcription antitermination protein NusB of Haemophilus influenzae (strain PittGG).